Reading from the N-terminus, the 73-residue chain is Protein BP4C (73 aa).

In terms of tissue distribution, pollen specific.

In Brassica napus (Rape), this protein is Protein BP4C (BP4C).